We begin with the raw amino-acid sequence, 208 residues long: Ras-related protein M-Ras (208 aa).

GTP contacts are provided by aspartate 21, glycine 22, glycine 23, valine 24, glycine 25, lysine 26, serine 27, alanine 28, phenylalanine 38, valine 39, proline 40, tyrosine 42, proline 44, and threonine 45. Serine 27 serves as a coordination point for Mg(2+). Positions 42 to 50 match the Effector region motif; the sequence is YDPTIEDSY. Mg(2+) is bound by residues threonine 45 and aspartate 67. GTP-binding residues include glycine 70, asparagine 126, lysine 127, aspartate 129, serine 156, alanine 157, and lysine 158. Cysteine 205 carries the post-translational modification Cysteine methyl ester. A lipid anchor (S-geranylgeranyl cysteine) is attached at cysteine 205. A propeptide spans 206–208 (removed in mature form); the sequence is VIL.

This sequence belongs to the small GTPase superfamily. Ras family. In terms of assembly, component of the SHOC2-MRAS-PP1c (SMP) holophosphatase complex consisting of SHOC2, GTP-bound M-Ras/MRAS and the catalytic subunit of protein phosphatase 1 (either PPP1CA, PPP1CB or PPP1CC). Interacts (active GTP-bound form) with both SHOC2 and PP1c (all isoforms) to form a tertiary complex; SHOC2 and PP1c preferably bind M-Ras/MRAS, but they also bind K-Ras/KRAS, N-Ras/NRAS and H-Ras/HRAS. Interacts with RGL3. Interacts (active GTP-bound form preferentially) with RGS14. Requires Mg(2+) as cofactor. As to expression, expressed in skeletal muscle cells.

It localises to the cell membrane. It catalyses the reaction GTP + H2O = GDP + phosphate + H(+). Functionally, signal transducer in the Ras-MAPK signaling pathway that regulates cell proliferation and survival. Core component of the SHOC2-MRAS-PP1c (SMP) holophosphatase complex that regulates the MAPK pathway activation. The formation of the SMP complex only occurs when MRAS is GTP-bound. MRAS has low intrinsic GTPase activity and may require additional factors for activation. The SMP complex specifically dephosphorylates the inhibitory phosphorylation at 'Ser-259' of RAF1 kinase, 'Ser-365' of BRAF kinase and 'Ser-214' of ARAF kinase, stimulating their kinase activities. This is Ras-related protein M-Ras (Mras) from Rattus norvegicus (Rat).